The primary structure comprises 542 residues: Membrane protein insertase YidC (542 aa).

The next 6 helical transmembrane spans lie at 6-26, 326-346, 350-370, 421-441, 458-478, and 501-521; these read NILLIGLLFVSFLLWQQWQTD, LVVDYGFLWWLAIPIHWLLMF, FVGNWGVAIILITLTVRGMLY, GGCLPILLQMPIFIALYWVLL, LSVQDPYYVLPLLMGVSMFLM, and VIFTVFFLWFPAGLVLYWLVG.

Belongs to the OXA1/ALB3/YidC family. Type 1 subfamily. In terms of assembly, interacts with the Sec translocase complex via SecD. Specifically interacts with transmembrane segments of nascent integral membrane proteins during membrane integration.

It is found in the cell inner membrane. Functionally, required for the insertion and/or proper folding and/or complex formation of integral membrane proteins into the membrane. Involved in integration of membrane proteins that insert both dependently and independently of the Sec translocase complex, as well as at least some lipoproteins. Aids folding of multispanning membrane proteins. The polypeptide is Membrane protein insertase YidC (Shewanella loihica (strain ATCC BAA-1088 / PV-4)).